Reading from the N-terminus, the 348-residue chain is MTAPSQVLKIRRPDDWHLHLRDGDMLKTVVPYTSEIYGRAIVMPNLAPPVTTVEAAVAYRQRILDAVPAGHDFTPLMTCYLTDSLDPNELERGFNEGVFTAAKLYPANATTNSSHGVTSVDAIMPVLERMEKIGMPLLVHGEVTHADIDIFDREARFIESVMEPLRQRLTALKVVFEHITTKDAADYVRDGNERLAATITPQHLMFNRNHMLVGGVRPHLYCLPILKRNIHQQALRELVASGFNRVFLGTDSAPHARHRKESSCGCAGCFNAPTALGSYATVFEEMNALQHFEAFCSVNGPQFYGLPVNDTFIELVREEQQVAESIALTDDTLVPFLAGETVRWSVKQ.

Positions 17 and 19 each coordinate Zn(2+). Substrate-binding positions include 19–21 (HLR) and asparagine 45. Lysine 103, histidine 140, and histidine 178 together coordinate Zn(2+). An N6-carboxylysine modification is found at lysine 103. Histidine 140 lines the substrate pocket. Leucine 223 contacts substrate. Position 251 (aspartate 251) interacts with Zn(2+). Aspartate 251 is a catalytic residue. Residues histidine 255 and alanine 267 each coordinate substrate.

Belongs to the metallo-dependent hydrolases superfamily. DHOase family. Class II DHOase subfamily. Homodimer. Zn(2+) is required as a cofactor.

The enzyme catalyses (S)-dihydroorotate + H2O = N-carbamoyl-L-aspartate + H(+). It participates in pyrimidine metabolism; UMP biosynthesis via de novo pathway; (S)-dihydroorotate from bicarbonate: step 3/3. Catalyzes the reversible cyclization of carbamoyl aspartate to dihydroorotate. The protein is Dihydroorotase of Escherichia coli (strain SMS-3-5 / SECEC).